A 262-amino-acid polypeptide reads, in one-letter code: Ubiquinone biosynthesis protein COQ4, mitochondrial (262 aa).

Residues His-154, Asp-155, His-158, and Glu-170 each contribute to the Zn(2+) site. The interval 243–262 (LGIEQPPDLRQMKKDMAKKK) is disordered. Positions 252–262 (RQMKKDMAKKK) are enriched in basic and acidic residues.

This sequence belongs to the COQ4 family. As to quaternary structure, component of a multi-subunit COQ enzyme complex, composed of at least COQ3, COQ4, COQ5, COQ6, COQ7 and COQ9. Zn(2+) serves as cofactor.

It localises to the mitochondrion inner membrane. It carries out the reaction a 4-hydroxy-3-methoxy-5-(all-trans-polyprenyl)benzoate + H(+) = a 2-methoxy-6-(all-trans-polyprenyl)phenol + CO2. The protein operates within cofactor biosynthesis; ubiquinone biosynthesis. Its function is as follows. Lyase that catalyzes the C1-decarboxylation of 4-hydroxy-3-methoxy-5-(all-trans-polyprenyl)benzoic acid into 2-methoxy-6-(all-trans-polyprenyl)phenol during ubiquinone biosynthesis. The chain is Ubiquinone biosynthesis protein COQ4, mitochondrial from Yarrowia lipolytica (strain CLIB 122 / E 150) (Yeast).